Here is an 86-residue protein sequence, read N- to C-terminus: Small ribosomal subunit protein bS20 (86 aa).

The protein belongs to the bacterial ribosomal protein bS20 family.

Its function is as follows. Binds directly to 16S ribosomal RNA. The protein is Small ribosomal subunit protein bS20 of Pelagibacter ubique (strain HTCC1062).